We begin with the raw amino-acid sequence, 535 residues long: CTP synthase (535 aa).

The segment at 1–268 (MKTKYIFVTG…DSLVCKKLEL (268 aa)) is amidoligase domain. Ser14 is a binding site for CTP. Ser14 lines the UTP pocket. 15 to 20 (SLGKGI) contributes to the ATP binding site. Tyr55 serves as a coordination point for L-glutamine. ATP is bound at residue Asp72. The Mg(2+) site is built by Asp72 and Glu142. CTP-binding positions include 149-151 (DIE), 189-194 (KTKPTQ), and Lys225. UTP contacts are provided by residues 189–194 (KTKPTQ) and Lys225. The 243-residue stretch at 293 to 535 (TIGLVGKYVE…IKVACTVKEK (243 aa)) folds into the Glutamine amidotransferase type-1 domain. Residue Gly355 participates in L-glutamine binding. Cys382 (nucleophile; for glutamine hydrolysis) is an active-site residue. Residues 383–386 (LGMQ), Glu406, and Arg463 contribute to the L-glutamine site. Catalysis depends on residues His508 and Glu510.

The protein belongs to the CTP synthase family. As to quaternary structure, homotetramer.

It catalyses the reaction UTP + L-glutamine + ATP + H2O = CTP + L-glutamate + ADP + phosphate + 2 H(+). The catalysed reaction is L-glutamine + H2O = L-glutamate + NH4(+). It carries out the reaction UTP + NH4(+) + ATP = CTP + ADP + phosphate + 2 H(+). It participates in pyrimidine metabolism; CTP biosynthesis via de novo pathway; CTP from UDP: step 2/2. Its activity is regulated as follows. Allosterically activated by GTP, when glutamine is the substrate; GTP has no effect on the reaction when ammonia is the substrate. The allosteric effector GTP functions by stabilizing the protein conformation that binds the tetrahedral intermediate(s) formed during glutamine hydrolysis. Inhibited by the product CTP, via allosteric rather than competitive inhibition. Catalyzes the ATP-dependent amination of UTP to CTP with either L-glutamine or ammonia as the source of nitrogen. Regulates intracellular CTP levels through interactions with the four ribonucleotide triphosphates. This chain is CTP synthase, found in Clostridium acetobutylicum (strain ATCC 824 / DSM 792 / JCM 1419 / IAM 19013 / LMG 5710 / NBRC 13948 / NRRL B-527 / VKM B-1787 / 2291 / W).